Here is a 54-residue protein sequence, read N- to C-terminus: Ovomucoid (54 aa).

Positions 4-54 (VDCSDYPKPVCTLDYMPLCGSDNKTYSNKCNFCNAVVDSNGTITLSHFGRC) constitute a Kazal-like domain. 3 disulfide bridges follow: C6-C36, C14-C33, and C22-C54. Residue N43 is glycosylated (N-linked (GlcNAc...) asparagine).

It localises to the secreted. In Coloeus monedula (Eurasian jackdaw), this protein is Ovomucoid.